The chain runs to 424 residues: Histidine--tRNA ligase (424 aa).

This sequence belongs to the class-II aminoacyl-tRNA synthetase family. Homodimer.

The protein resides in the cytoplasm. It carries out the reaction tRNA(His) + L-histidine + ATP = L-histidyl-tRNA(His) + AMP + diphosphate + H(+). This Shewanella piezotolerans (strain WP3 / JCM 13877) protein is Histidine--tRNA ligase.